A 484-amino-acid polypeptide reads, in one-letter code: tRNA sulfurtransferase (484 aa).

The region spanning 63 to 167 (ERLVEALKCI…NKDLFIVTQR (105 aa)) is the THUMP domain. ATP-binding positions include 185–186 (LM), lysine 267, glycine 289, and glutamine 298. Residues cysteine 346 and cysteine 458 are joined by a disulfide bond. Positions 406-484 (IPENAVVVDI…GFKNVKVYRP (79 aa)) constitute a Rhodanese domain. Catalysis depends on cysteine 458, which acts as the Cysteine persulfide intermediate.

Belongs to the ThiI family.

It is found in the cytoplasm. It carries out the reaction [ThiI sulfur-carrier protein]-S-sulfanyl-L-cysteine + a uridine in tRNA + 2 reduced [2Fe-2S]-[ferredoxin] + ATP + H(+) = [ThiI sulfur-carrier protein]-L-cysteine + a 4-thiouridine in tRNA + 2 oxidized [2Fe-2S]-[ferredoxin] + AMP + diphosphate. It catalyses the reaction [ThiS sulfur-carrier protein]-C-terminal Gly-Gly-AMP + S-sulfanyl-L-cysteinyl-[cysteine desulfurase] + AH2 = [ThiS sulfur-carrier protein]-C-terminal-Gly-aminoethanethioate + L-cysteinyl-[cysteine desulfurase] + A + AMP + 2 H(+). It participates in cofactor biosynthesis; thiamine diphosphate biosynthesis. In terms of biological role, catalyzes the ATP-dependent transfer of a sulfur to tRNA to produce 4-thiouridine in position 8 of tRNAs, which functions as a near-UV photosensor. Also catalyzes the transfer of sulfur to the sulfur carrier protein ThiS, forming ThiS-thiocarboxylate. This is a step in the synthesis of thiazole, in the thiamine biosynthesis pathway. The sulfur is donated as persulfide by IscS. The sequence is that of tRNA sulfurtransferase from Colwellia psychrerythraea (strain 34H / ATCC BAA-681) (Vibrio psychroerythus).